Reading from the N-terminus, the 483-residue chain is MKAFYAFCVVLLVFGSVSEAKFDDFEDEEDIVEYDDNDFAEFEDVMEDSVTESPQRVISTEDDEDEATVELEGQDESQEGDFEDADTQEGDTESEPYDDEEFEGYEDKPDTSSNKNKDPITIVDVPAHLQNSWESYYLEILMVTGLLAYIMNYIIGKNKNSRLAQAWFNSHRELLESNFTLVGDDGTNKEATSTGKLNQENEHIYNLWCSGRVCCEGMLIQLRFLKRQDLLNVLARMMRPVSDQVQIKVTMNDEDMDTYVFAVGTRKALLRLQKEMQDLSEFCSDKPKSGAKYGLPDSLAILSEMGEVTEGMMDTKMVHFLTHYADKIESVHFSDQFSGPKIMQEEGQPLKLPDTKRTLLFTFNVPGSGNTYPKDMESLLPLMNMVIYSIDKAKKFRLNREGKQKADKNRARVEENFLKLTHVQRQEAAQSRREEKKRAEKERIMNEEDPEKQRRLEEAALRREQKKLEKKQMKMKQIKVKAM.

The N-terminal stretch at 1–20 (MKAFYAFCVVLLVFGSVSEA) is a signal peptide. Residues 21-135 (KFDDFEDEED…PAHLQNSWES (115 aa)) are Cytoplasmic-facing. Positions 46-119 (MEDSVTESPQ…DTSSNKNKDP (74 aa)) are disordered. Positions 60–104 (TEDDEDEATVELEGQDESQEGDFEDADTQEGDTESEPYDDEEFEG) are enriched in acidic residues. The segment covering 105–118 (YEDKPDTSSNKNKD) has biased composition (basic and acidic residues). A helical transmembrane segment spans residues 136–156 (YYLEILMVTGLLAYIMNYIIG). Topologically, residues 157–483 (KNKNSRLAQA…KMKQIKVKAM (327 aa)) are lumenal. A glycan (N-linked (GlcNAc...) asparagine) is linked at asparagine 178. The segment at 424–483 (QRQEAAQSRREEKKRAEKERIMNEEDPEKQRRLEEAALRREQKKLEKKQMKMKQIKVKAM) is disordered. Residues 430–472 (QSRREEKKRAEKERIMNEEDPEKQRRLEEAALRREQKKLEKKQ) show a composition bias toward basic and acidic residues. Residues 450 to 483 (PEKQRRLEEAALRREQKKLEKKQMKMKQIKVKAM) are a coiled coil. Residues 473-483 (MKMKQIKVKAM) show a composition bias toward basic residues.

It belongs to the CCDC47 family. As to quaternary structure, component of the PAT complex, composed of WDR83OS/Asterix and CCDC47. The PAT complex is part of the multi-pass translocon (MPT) complex, composed of three subcomplexes, the GEL complex (composed of RAB5IF/OPTI and TMCO1), the BOS complex (composed of NCLN/Nicalin, NOMO1 and TMEM147) and the PAT complex (composed of WDR83OS/Asterix and CCDC47). The MPT complex associates with the SEC61 complex. Interacts with VCP, HSPA5, DERL1, DERL2 and SELENOS. As to expression, in the embryo, expressed in the endodermal layer of the yolk sac and in the small intestine.

The protein localises to the endoplasmic reticulum membrane. It is found in the rough endoplasmic reticulum membrane. Component of the multi-pass translocon (MPT) complex that mediates insertion of multi-pass membrane proteins into the lipid bilayer of membranes. The MPT complex takes over after the SEC61 complex: following membrane insertion of the first few transmembrane segments of proteins by the SEC61 complex, the MPT complex occludes the lateral gate of the SEC61 complex to promote insertion of subsequent transmembrane regions. Within the MPT complex, the PAT subcomplex sequesters any highly polar regions in the transmembrane domains away from the non-polar membrane environment until they can be buried in the interior of the fully assembled protein. Within the PAT subcomplex, CCDC47 occludes the lateral gate of the SEC61 complex. Involved in the regulation of calcium ion homeostasis in the ER. Required for proper protein degradation via the ERAD (ER-associated degradation) pathway. Has an essential role in the maintenance of ER organization during embryogenesis. The polypeptide is PAT complex subunit CCDC47 (Mus musculus (Mouse)).